A 281-amino-acid polypeptide reads, in one-letter code: Non-selective voltage-gated ion channel 2 (281 aa).

ATP-binding residues include Arg-11 and Arg-19.

This sequence belongs to the eukaryotic mitochondrial porin family.

Its subcellular location is the mitochondrion outer membrane. Non-selective voltage-gated ion channel that mediates the transport of anions and cations through the mitochondrion outer membrane. The channel adopts an open conformation at low or zero membrane potential and a closed conformation at potentials above 30-40 mV. The open state has a weak anion selectivity whereas the closed state is cation-selective. Does not confer permeability to NADH. In terms of biological role, catalyzes the scrambling of phospholipids across the outer mitochondrial membrane; the mechanism is unrelated to channel activity and is capable of translocating both anionic and zwitterionic phospholipids. In Saccharomyces cerevisiae (strain ATCC 204508 / S288c) (Baker's yeast), this protein is Non-selective voltage-gated ion channel 2 (POR2).